The chain runs to 401 residues: Imidazolonepropionase (401 aa).

The Fe(3+) site is built by H66 and H68. 2 residues coordinate Zn(2+): H66 and H68. 4-imidazolone-5-propanoate is bound by residues R75, Y138, and H171. Residue Y138 coordinates N-formimidoyl-L-glutamate. H236 lines the Fe(3+) pocket. H236 contacts Zn(2+). A 4-imidazolone-5-propanoate-binding site is contributed by Q239. D311 serves as a coordination point for Fe(3+). Zn(2+) is bound at residue D311. 2 residues coordinate N-formimidoyl-L-glutamate: N313 and G315. Residue T316 participates in 4-imidazolone-5-propanoate binding.

This sequence belongs to the metallo-dependent hydrolases superfamily. HutI family. Zn(2+) serves as cofactor. It depends on Fe(3+) as a cofactor.

Its subcellular location is the cytoplasm. The enzyme catalyses 4-imidazolone-5-propanoate + H2O = N-formimidoyl-L-glutamate. It functions in the pathway amino-acid degradation; L-histidine degradation into L-glutamate; N-formimidoyl-L-glutamate from L-histidine: step 3/3. In terms of biological role, catalyzes the hydrolytic cleavage of the carbon-nitrogen bond in imidazolone-5-propanoate to yield N-formimidoyl-L-glutamate. It is the third step in the universal histidine degradation pathway. This chain is Imidazolonepropionase, found in Acinetobacter baumannii (strain ACICU).